A 654-amino-acid chain; its full sequence is Pentatricopeptide repeat-containing protein At5g61400 (654 aa).

PPR repeat units follow at residues 37–71 (SSFS…RVSK), 74–104 (DLQS…LIER), 131–161 (SIGV…MKCS), 163–197 (DSKA…GLVP), 198–232 (DVHI…GIKP), 233–267 (NVYI…GVLP), 268–302 (NLYT…ELLP), 303–337 (NVVV…GVDP), 338–372 (NLYV…NLSP), 373–407 (DVFT…RIFP), 408–442 (SSAT…GVEP), 443–477 (NIIT…GIVP), 478–512 (DVVT…GIHP), 513–543 (NDHT…NNQQ), 548–582 (NHVG…GITP), and 583–617 (DICS…GILP).

Belongs to the PPR family. P subfamily.

This Arabidopsis thaliana (Mouse-ear cress) protein is Pentatricopeptide repeat-containing protein At5g61400.